Consider the following 93-residue polypeptide: C-C motif chemokine 3 (93 aa).

Residues 1-24 (MKVAVAALAVLLCAMALCSQVFSA) form the signal peptide. Intrachain disulfides connect C34/C58 and C35/C74.

It belongs to the intercrine beta (chemokine CC) family. In terms of assembly, self-associates. Also heterodimer of MIP-1-alpha(4-69) and MIP-1-beta(3-69). Interacts with CCR1.

Its subcellular location is the secreted. In terms of biological role, monokine with inflammatory and chemokinetic properties. Binds to CCR1, CCR4 and CCR5. One of the major HIV-suppressive factors produced by CD8+ T-cells. Recombinant MIP-1-alpha induces a dose-dependent inhibition of different strains of HIV-1, HIV-2, and simian immunodeficiency virus (SIV). This is C-C motif chemokine 3 (CCL3) from Bos taurus (Bovine).